The sequence spans 132 residues: ATP synthase epsilon chain, chloroplastic (132 aa).

Belongs to the ATPase epsilon chain family. In terms of assembly, F-type ATPases have 2 components, CF(1) - the catalytic core - and CF(0) - the membrane proton channel. CF(1) has five subunits: alpha(3), beta(3), gamma(1), delta(1), epsilon(1). CF(0) has three main subunits: a, b and c.

The protein localises to the plastid. Its subcellular location is the chloroplast thylakoid membrane. Functionally, produces ATP from ADP in the presence of a proton gradient across the membrane. The protein is ATP synthase epsilon chain, chloroplastic of Coffea arabica (Arabian coffee).